We begin with the raw amino-acid sequence, 467 residues long: Neuromedin-K receptor (467 aa).

At 1–86 (MDSFAAAETW…TNQFVQPSWR (86 aa)) the chain is on the extracellular side. Asparagine 23, asparagine 50, and asparagine 75 each carry an N-linked (GlcNAc...) asparagine glycan. The chain crosses the membrane as a helical span at residues 87–109 (IALWSLAYGVVVAVAVFGNLIVI). Topologically, residues 110–119 (WIILAHKRMR) are cytoplasmic. A helical membrane pass occupies residues 120–141 (TVTNYFLVNLAFSDASMAAFNT). Over 142-161 (LVNFIYALHSEWYFGANYCR) the chain is Extracellular. Cysteine 160 and cysteine 235 are oxidised to a cystine. The helical transmembrane segment at 162 to 183 (FQNFFPITAVFASIYSMTAIAV) threads the bilayer. Topologically, residues 184 to 203 (DRYMAIIDPLKPRLSATATK) are cytoplasmic. A helical transmembrane segment spans residues 204–224 (IVIGSIWILAFLLALPQCLYS). Residues 225–247 (KTKVMPGRTLCYVQWPEGPKQHF) lie on the Extracellular side of the membrane. The helical transmembrane segment at 248–272 (IYHIIVIILVYCFPLLIMGITYTIV) threads the bilayer. Residues 273–301 (GITLWGGEIPGDTCDKYHEQLKAKRKVVK) are Cytoplasmic-facing. Residues 302–323 (MMIIVVVTFAICWLPYHIYFIL) traverse the membrane as a helical segment. The Extracellular segment spans residues 324–336 (TAIYQQLNRWKYI). The chain crosses the membrane as a helical span at residues 337–361 (QQVYLASFWLAMSSTMYNPIIYCCL). Residues 362–467 (NKRFRAGFKR…SPYTSMEEYS (106 aa)) lie on the Cytoplasmic side of the membrane. Cysteine 376 carries S-palmitoyl cysteine lipidation. The segment at 416–467 (DPSDADNTRSSRKKRATPGDPNFNGCSRRNSKSASTTSSFISSPYTSMEEYS) is disordered. The span at 447 to 467 (KSASTTSSFISSPYTSMEEYS) shows a compositional bias: low complexity.

This sequence belongs to the G-protein coupled receptor 1 family.

The protein resides in the cell membrane. Functionally, this is a receptor for the tachykinin neuropeptide neuromedin-K (neurokinin B). It is associated with G proteins that activate a phosphatidylinositol-calcium second messenger system. The protein is Neuromedin-K receptor (TACR3) of Oryctolagus cuniculus (Rabbit).